Consider the following 388-residue polypeptide: Deoxyguanosinetriphosphate triphosphohydrolase-like protein (388 aa).

A disordered region spans residues 1-32; sequence MSVGMAAPRAPYSCDPDRSRGRLFAEPPSRTR. An HD domain is found at 69 to 205; sequence RLTHSLEVAQ…AALADDIAYD (137 aa).

Belongs to the dGTPase family. Type 2 subfamily.

This is Deoxyguanosinetriphosphate triphosphohydrolase-like protein from Bradyrhizobium sp. (strain ORS 278).